A 174-amino-acid polypeptide reads, in one-letter code: UPF0336 protein MAP_3996c (174 aa).

Residues 11–131 (IGSHYRAPDY…VLAEIRSEVT (121 aa)) enclose the MaoC-like domain.

Belongs to the UPF0336 family.

This Mycolicibacterium paratuberculosis (strain ATCC BAA-968 / K-10) (Mycobacterium paratuberculosis) protein is UPF0336 protein MAP_3996c.